The primary structure comprises 3065 residues: MAX gene-associated protein (3065 aa).

Residues Lys4 and Lys178 each participate in a glycyl lysine isopeptide (Lys-Gly) (interchain with G-Cter in SUMO2) cross-link. The T-box DNA-binding region spans 84 to 260 (MWNEFYHRST…YNPFAKGFRD (177 aa)). The span at 259–277 (RDDGLNNKPQRDGKQKNSS) shows a compositional bias: basic and acidic residues. Residues 259–322 (RDDGLNNKPQ…GHETSGKGLE (64 aa)) are disordered. Residues 278–289 (DQEGNNISSSSG) are compositionally biased toward polar residues. Basic and acidic residues predominate over residues 309–322 (PLSRGHETSGKGLE). Glycyl lysine isopeptide (Lys-Gly) (interchain with G-Cter in SUMO2) cross-links involve residues Lys323, Lys329, Lys349, Lys432, Lys460, Lys465, and Lys482. Ser534 bears the Phosphoserine mark. Lys570 is covalently cross-linked (Glycyl lysine isopeptide (Lys-Gly) (interchain with G-Cter in SUMO2)). A disordered region spans residues 604–653 (QNASPNVPGKRGRPRKLKLCKAGRPPKNTGKSLISTKNTPVSPGSTFPDV). At Ser607 the chain carries Phosphoserine. Lys613 is covalently cross-linked (Glycyl lysine isopeptide (Lys-Gly) (interchain with G-Cter in SUMO2)). Residues 613-624 (KRGRPRKLKLCK) show a composition bias toward basic residues. The span at 632–648 (TGKSLISTKNTPVSPGS) shows a compositional bias: polar residues. The residue at position 645 (Ser645) is a Phosphoserine. Glycyl lysine isopeptide (Lys-Gly) (interchain with G-Cter in SUMO2) cross-links involve residues Lys654, Lys785, Lys791, Lys817, and Lys826. Ser851 bears the Phosphoserine mark. The segment at 881 to 911 (STSYSLKPHSVPPVSRKAKSQNRQATFSGRT) is disordered. Positions 901-911 (QNRQATFSGRT) are enriched in polar residues. Ser924 bears the Phosphoserine mark. A Glycyl lysine isopeptide (Lys-Gly) (interchain with G-Cter in SUMO2) cross-link involves residue Lys928. Residues 971-990 (RQAQQQQQQQQGSRPPGLSK) form a disordered region. The span at 972–981 (QAQQQQQQQQ) shows a compositional bias: low complexity. Glycyl lysine isopeptide (Lys-Gly) (interchain with G-Cter in SUMO2) cross-links involve residues Lys990, Lys1091, Lys1140, Lys1162, Lys1199, and Lys1207. Positions 1111-1147 (YDTLGEEAREEEEGIREEEEQLKEKKKRKKLEYTICE) form a coiled coil. Ser1208 is subject to Phosphoserine. Disordered regions lie at residues 1246–1332 (RKKE…PGGP) and 1380–1429 (RKSR…MEDI). Low complexity-rich tracts occupy residues 1253-1269 (QPSSSSSPSPSFQQQTS) and 1310-1322 (KSSCNEGESSSTS). Phosphoserine is present on residues Ser1430 and Ser1457. Glycyl lysine isopeptide (Lys-Gly) (interchain with G-Cter in SUMO2) cross-links involve residues Lys1461 and Lys1502. 3 disordered regions span residues 1488 to 1517 (SRKPRTLLPSTSNSKMASSSGTATNRPGKN), 1905 to 1927 (SPPEPQSFASKTGSETKITYSSG), and 1967 to 2029 (QMKR…EDRG). 2 stretches are compositionally biased toward polar residues: residues 1495–1514 (LPSTSNSKMASSSGTATNRP) and 1911–1927 (SFASKTGSETKITYSSG). The span at 1968–1994 (MKRESQNPDQKDETNSIKREQETKKVL) shows a compositional bias: basic and acidic residues. Residues Lys1985 and Lys1992 each participate in a glycyl lysine isopeptide (Lys-Gly) (interchain with G-Cter in SUMO2) cross-link. Residues 2008–2023 (IKQNSGAATSEETLND) are compositionally biased toward polar residues. Glycyl lysine isopeptide (Lys-Gly) (interchain with G-Cter in SUMO2) cross-links involve residues Lys2103, Lys2113, Lys2135, Lys2139, Lys2146, Lys2159, Lys2194, Lys2206, and Lys2238. The interval 2258–2316 (RRAAKSSRGNGHFQGHLLLPGEQIQPKQEKKGGRSSADFTVLDLEEDDEDDNEKTDDSI) is disordered. Arg2265 bears the Omega-N-methylarginine mark. A Glycyl lysine isopeptide (Lys-Gly) (interchain with G-Cter in SUMO2) cross-link involves residue Lys2284. Positions 2300–2316 (DLEEDDEDDNEKTDDSI) are enriched in acidic residues. Glycyl lysine isopeptide (Lys-Gly) (interchain with G-Cter in SUMO2) cross-links involve residues Lys2378, Lys2413, Lys2457, and Lys2532. One can recognise a bHLH domain in the interval 2423 to 2474 (YYRRTHTANERRRRGEMRDLFEKLKITLGLLHSSKVSKSLILTRAFSEIQGL). Residue Ser2541 is modified to Phosphoserine. A Glycyl lysine isopeptide (Lys-Gly) (interchain with G-Cter in SUMO2) cross-link involves residue Lys2546. A disordered region spans residues 2576 to 2595 (KKDQATENTSPLNTPHTSAN). Over residues 2581 to 2595 (TENTSPLNTPHTSAN) the composition is skewed to polar residues. Glycyl lysine isopeptide (Lys-Gly) (interchain with G-Cter in SUMO2) cross-links involve residues Lys2629, Lys2679, Lys2698, and Lys2784. Positions 2668–2709 (GSKYPHEVPDSKPSDHLKDTVRNEDNSLEDKGRISSRGNRDG) are disordered. Residues 2671–2709 (YPHEVPDSKPSDHLKDTVRNEDNSLEDKGRISSRGNRDG) show a composition bias toward basic and acidic residues. The stretch at 2817-2841 (DDTDETLTSLLNEIAFLNQQLNDDS) forms a coiled coil. Ser2910 and Ser2921 each carry phosphoserine. The tract at residues 2944-2968 (AIDGGKNTSGLPAEPESVSSPPTLH) is disordered. Phosphoserine is present on Ser2978. Lys3041 participates in a covalent cross-link: Glycyl lysine isopeptide (Lys-Gly) (interchain with G-Cter in SUMO2).

In terms of assembly, interacts with MAX. Requires dimerization with MAX for E-box binding. Component of some MLL1/MLL complex, at least composed of the core components KMT2A/MLL1, ASH2L, HCFC1/HCF1, WDR5 and RBBP5, as well as the facultative components BACC1, CHD8, E2F6, HSP70, INO80C, KANSL1, LAS1L, MAX, MCRS1, MGA, MYST1/MOF, PELP1, PHF20, PRP31, RING2, RUVB1/TIP49A, RUVB2/TIP49B, SENP3, TAF1, TAF4, TAF6, TAF7, TAF9 and TEX10. Interacts with ZMYND11. As to expression, highly expressed in germ cells and granulosa cells.

The protein localises to the nucleus. Functionally, functions as a dual-specificity transcription factor, regulating the expression of both MAX-network and T-box family target genes. Functions as a repressor or an activator. Binds to 5'-AATTTCACACCTAGGTGTGAAATT-3' core sequence and seems to regulate MYC-MAX target genes. Suppresses transcriptional activation by MYC and inhibits MYC-dependent cell transformation. Function activated by heterodimerization with MAX. This heterodimerization serves the dual function of both generating an E-box-binding heterodimer and simultaneously blocking interaction of a corepressor. The sequence is that of MAX gene-associated protein from Homo sapiens (Human).